Consider the following 447-residue polypeptide: Tubulin beta-4 chain (447 aa).

Residues Gln-11, Glu-69, Ser-138, Gly-142, Thr-143, Gly-144, Asn-204, and Asn-226 each coordinate GTP. Glu-69 provides a ligand contact to Mg(2+). Residues 423–447 are disordered; sequence QQYQDATADEEGEYEDEEQQEADDM. Over residues 429–447 the composition is skewed to acidic residues; the sequence is TADEEGEYEDEEQQEADDM.

Belongs to the tubulin family. In terms of assembly, dimer of alpha and beta chains. A typical microtubule is a hollow water-filled tube with an outer diameter of 25 nm and an inner diameter of 15 nM. Alpha-beta heterodimers associate head-to-tail to form protofilaments running lengthwise along the microtubule wall with the beta-tubulin subunit facing the microtubule plus end conferring a structural polarity. Microtubules usually have 13 protofilaments but different protofilament numbers can be found in some organisms and specialized cells. It depends on Mg(2+) as a cofactor. As to expression, expressed in roots and leaf sheaths.

Its subcellular location is the cytoplasm. It localises to the cytoskeleton. Tubulin is the major constituent of microtubules, a cylinder consisting of laterally associated linear protofilaments composed of alpha- and beta-tubulin heterodimers. Microtubules grow by the addition of GTP-tubulin dimers to the microtubule end, where a stabilizing cap forms. Below the cap, tubulin dimers are in GDP-bound state, owing to GTPase activity of alpha-tubulin. The polypeptide is Tubulin beta-4 chain (TUBB4) (Oryza sativa subsp. japonica (Rice)).